The primary structure comprises 277 residues: Large ribosomal subunit protein uL2 (277 aa).

Disordered regions lie at residues 1-23 (MAIK…DFAE), 36-58 (PLHK…GGGH), and 219-277 (TVRG…RKNK). Polar residues predominate over residues 8 to 20 (PTSNGRRGMTSSD). Basic residues predominate over residues 258–277 (KTRKKKNKSDKFIVRRRKNK).

The protein belongs to the universal ribosomal protein uL2 family. As to quaternary structure, part of the 50S ribosomal subunit. Forms a bridge to the 30S subunit in the 70S ribosome.

One of the primary rRNA binding proteins. Required for association of the 30S and 50S subunits to form the 70S ribosome, for tRNA binding and peptide bond formation. It has been suggested to have peptidyltransferase activity; this is somewhat controversial. Makes several contacts with the 16S rRNA in the 70S ribosome. The sequence is that of Large ribosomal subunit protein uL2 from Bacillus licheniformis (strain ATCC 14580 / DSM 13 / JCM 2505 / CCUG 7422 / NBRC 12200 / NCIMB 9375 / NCTC 10341 / NRRL NRS-1264 / Gibson 46).